The following is a 208-amino-acid chain: Fibroblast growth factor 10 (208 aa).

The N-terminal stretch at 1–37 (MWKWILTHCASAFPHLPGCCCCCFLLLFLVSSVPVTC) is a signal peptide. 2 N-linked (GlcNAc...) asparagine glycosylation sites follow: Asn51 and Asn196.

This sequence belongs to the heparin-binding growth factors family. In terms of assembly, interacts with FGFR1 and FGFR2. Interacts with FGFBP1.

The protein resides in the secreted. Functionally, plays an important role in the regulation of embryonic development, cell proliferation and cell differentiation. Required for normal branching morphogenesis. May play a role in wound healing. The sequence is that of Fibroblast growth factor 10 (FGF10) from Homo sapiens (Human).